The primary structure comprises 702 residues: Ribosomal RNA large subunit methyltransferase K/L (702 aa).

Positions 43–154 constitute a THUMP domain; it reads LIYQSLMWSR…KETASIALDL (112 aa).

The protein belongs to the methyltransferase superfamily. RlmKL family.

It localises to the cytoplasm. The enzyme catalyses guanosine(2445) in 23S rRNA + S-adenosyl-L-methionine = N(2)-methylguanosine(2445) in 23S rRNA + S-adenosyl-L-homocysteine + H(+). The catalysed reaction is guanosine(2069) in 23S rRNA + S-adenosyl-L-methionine = N(2)-methylguanosine(2069) in 23S rRNA + S-adenosyl-L-homocysteine + H(+). Its function is as follows. Specifically methylates the guanine in position 2445 (m2G2445) and the guanine in position 2069 (m7G2069) of 23S rRNA. This Salmonella choleraesuis (strain SC-B67) protein is Ribosomal RNA large subunit methyltransferase K/L.